A 417-amino-acid chain; its full sequence is Tol-Pal system protein TolB (417 aa).

The signal sequence occupies residues 1–16; it reads MKYLWLFLIYAIGLFA.

The protein belongs to the TolB family. As to quaternary structure, the Tol-Pal system is composed of five core proteins: the inner membrane proteins TolA, TolQ and TolR, the periplasmic protein TolB and the outer membrane protein Pal. They form a network linking the inner and outer membranes and the peptidoglycan layer.

The protein resides in the periplasm. Its function is as follows. Part of the Tol-Pal system, which plays a role in outer membrane invagination during cell division and is important for maintaining outer membrane integrity. The sequence is that of Tol-Pal system protein TolB from Helicobacter pylori (strain J99 / ATCC 700824) (Campylobacter pylori J99).